The chain runs to 340 residues: Glyceraldehyde-3-phosphate dehydrogenase (340 aa).

NAD(+)-binding positions include 11–12 (SI) and Gly-111. 140–142 (SCN) serves as a coordination point for D-glyceraldehyde 3-phosphate. Catalysis depends on Cys-141, which acts as the Nucleophile. Arg-169 provides a ligand contact to NAD(+). Residue 195–196 (HG) coordinates D-glyceraldehyde 3-phosphate. Gln-303 contributes to the NAD(+) binding site.

It belongs to the glyceraldehyde-3-phosphate dehydrogenase family. As to quaternary structure, homotetramer.

It is found in the cytoplasm. The enzyme catalyses D-glyceraldehyde 3-phosphate + phosphate + NADP(+) = (2R)-3-phospho-glyceroyl phosphate + NADPH + H(+). It carries out the reaction D-glyceraldehyde 3-phosphate + phosphate + NAD(+) = (2R)-3-phospho-glyceroyl phosphate + NADH + H(+). The protein operates within carbohydrate degradation; glycolysis; pyruvate from D-glyceraldehyde 3-phosphate: step 1/5. The protein is Glyceraldehyde-3-phosphate dehydrogenase of Methanococcus maripaludis (strain DSM 14266 / JCM 13030 / NBRC 101832 / S2 / LL).